Consider the following 184-residue polypeptide: mRNA transport regulator MTR2 (184 aa).

The disordered stretch occupies residues 111 to 135 (KMGQDATVPIQPNNTGNRNRPNDMN). The segment covering 120–129 (IQPNNTGNRN) has biased composition (polar residues). Thr125 is subject to Phosphothreonine.

In terms of assembly, interacts with MEX67.

It is found in the nucleus. Functionally, affects mRNA transport from the nucleus to the cytoplasm. The polypeptide is mRNA transport regulator MTR2 (MTR2) (Saccharomyces cerevisiae (strain ATCC 204508 / S288c) (Baker's yeast)).